A 470-amino-acid chain; its full sequence is Neuraminidase (470 aa).

Residues 1 to 6 (MNPNQK) are Intravirion-facing. A helical membrane pass occupies residues 7 to 27 (IICISATGMTLSVVSLLIGIA). Positions 11–33 (SATGMTLSVVSLLIGIANLGLNI) are involved in apical transport and lipid raft association. The Virion surface portion of the chain corresponds to 28 to 470 (NLGLNIGLHY…HDGAEIIYFK (443 aa)). Positions 36–88 (HYKVGDTPDANTPNVNETNSTTTIINNNTQNNFTNITNIIVSKNEERTFLNLT) are hypervariable stalk region. Asparagine 51, asparagine 54, asparagine 62, asparagine 67, asparagine 70, and asparagine 86 each carry an N-linked (GlcNAc...) asparagine; by host glycan. A head of neuraminidase region spans residues 91–470 (LCEVNSWHIL…HDGAEIIYFK (380 aa)). Cystine bridges form between cysteine 92–cysteine 419, cysteine 124–cysteine 129, cysteine 184–cysteine 231, cysteine 233–cysteine 238, cysteine 279–cysteine 292, cysteine 281–cysteine 290, cysteine 319–cysteine 337, and cysteine 423–cysteine 449. Arginine 118 lines the substrate pocket. Residue asparagine 146 is glycosylated (N-linked (GlcNAc...) asparagine; by host). Aspartate 151 (proton donor/acceptor) is an active-site residue. Arginine 152 is a substrate binding site. The N-linked (GlcNAc...) asparagine; by host glycan is linked to asparagine 201. 277-278 (EE) contacts substrate. Arginine 293 is a substrate binding site. Ca(2+) is bound by residues aspartate 294, glycine 298, and aspartate 325. Substrate is bound at residue arginine 372. An N-linked (GlcNAc...) asparagine; by host glycan is attached at asparagine 402. Residue tyrosine 406 is the Nucleophile of the active site.

Belongs to the glycosyl hydrolase 34 family. Homotetramer. Requires Ca(2+) as cofactor. Post-translationally, N-glycosylated.

It is found in the virion membrane. Its subcellular location is the host apical cell membrane. It catalyses the reaction Hydrolysis of alpha-(2-&gt;3)-, alpha-(2-&gt;6)-, alpha-(2-&gt;8)- glycosidic linkages of terminal sialic acid residues in oligosaccharides, glycoproteins, glycolipids, colominic acid and synthetic substrates.. Inhibited by the neuraminidase inhibitors zanamivir (Relenza) and oseltamivir (Tamiflu). These drugs interfere with the release of progeny virus from infected cells and are effective against all influenza strains. Resistance to neuraminidase inhibitors is quite rare. Its function is as follows. Catalyzes the removal of terminal sialic acid residues from viral and cellular glycoconjugates. Cleaves off the terminal sialic acids on the glycosylated HA during virus budding to facilitate virus release. Additionally helps virus spread through the circulation by further removing sialic acids from the cell surface. These cleavages prevent self-aggregation and ensure the efficient spread of the progeny virus from cell to cell. Otherwise, infection would be limited to one round of replication. Described as a receptor-destroying enzyme because it cleaves a terminal sialic acid from the cellular receptors. May facilitate viral invasion of the upper airways by cleaving the sialic acid moieties on the mucin of the airway epithelial cells. Likely to plays a role in the budding process through its association with lipid rafts during intracellular transport. May additionally display a raft-association independent effect on budding. Plays a role in the determination of host range restriction on replication and virulence. Sialidase activity in late endosome/lysosome traffic seems to enhance virus replication. In Influenza A virus (strain A/Budgerigar/Hokkaido/1/1977 H4N6), this protein is Neuraminidase.